Consider the following 270-residue polypeptide: uncharacterized protein (270 aa).

The N-terminal stretch at 1–22 is a signal peptide; it reads MEYIKKIALYMSVLLLIIFIGG. Cys23 is lipidated: N-palmitoyl cysteine. Cys23 is lipidated: S-diacylglycerol cysteine.

It belongs to the staphylococcal tandem lipoprotein family.

It localises to the cell membrane. This is an uncharacterized protein from Staphylococcus aureus (strain N315).